The primary structure comprises 70 residues: Large ribosomal subunit protein eL38 (70 aa).

Belongs to the eukaryotic ribosomal protein eL38 family.

This Branchiostoma belcheri (Amphioxus) protein is Large ribosomal subunit protein eL38 (RPL38).